A 153-amino-acid chain; its full sequence is Superoxide dismutase [Cu-Zn] (153 aa).

Residues His45 and His47 each coordinate Cu cation. Thr53 carries the post-translational modification Phosphothreonine. A disulfide bond links Cys56 and Cys145. Ser59 carries the phosphoserine modification. His62 is a binding site for Cu cation. Zn(2+)-binding residues include His62, His70, His79, and Asp82. His119 is a binding site for Cu cation.

Belongs to the Cu-Zn superoxide dismutase family. As to quaternary structure, homodimer. Cu cation is required as a cofactor. It depends on Zn(2+) as a cofactor.

It is found in the cytoplasm. The enzyme catalyses 2 superoxide + 2 H(+) = H2O2 + O2. Destroys radicals which are normally produced within the cells and which are toxic to biological systems. The chain is Superoxide dismutase [Cu-Zn] from Drosophila melanogaster (Fruit fly).